Here is a 245-residue protein sequence, read N- to C-terminus: 3-deoxy-manno-octulosonate cytidylyltransferase (245 aa).

Belongs to the KdsB family.

It is found in the cytoplasm. It carries out the reaction 3-deoxy-alpha-D-manno-oct-2-ulosonate + CTP = CMP-3-deoxy-beta-D-manno-octulosonate + diphosphate. It participates in nucleotide-sugar biosynthesis; CMP-3-deoxy-D-manno-octulosonate biosynthesis; CMP-3-deoxy-D-manno-octulosonate from 3-deoxy-D-manno-octulosonate and CTP: step 1/1. The protein operates within bacterial outer membrane biogenesis; lipopolysaccharide biosynthesis. Activates KDO (a required 8-carbon sugar) for incorporation into bacterial lipopolysaccharide in Gram-negative bacteria. The chain is 3-deoxy-manno-octulosonate cytidylyltransferase from Elusimicrobium minutum (strain Pei191).